A 259-amino-acid polypeptide reads, in one-letter code: MSKRIEVNDLNVYYGKFHAVEDVSLTIEPRSVTAFIGPSGCGKSTFLRTLNRMHEVIPGAYVEGEVLIDGNNLYGAGVDPVLVRRQVGMVFQRPNPFPTMSIRDNVLAGVKLNNHRISKTDADDLVEGSLRGANLWNEVKDRLNLPGSGLSGGQQQRLCIARAIAVSPDVLLMDEPCSALDPISTLAIEDLIEELKNDYTIVIVTHNMQQASRVSDRTAFFTIAGTGKPGKLIEYNDTNIIFSNPSAQATEDYVSGRFG.

The ABC transporter domain occupies 5-248; the sequence is IEVNDLNVYY…NIIFSNPSAQ (244 aa). 37–44 contacts ATP; sequence GPSGCGKS.

It belongs to the ABC transporter superfamily. Phosphate importer (TC 3.A.1.7) family. As to quaternary structure, the complex is composed of two ATP-binding proteins (PstB), two transmembrane proteins (PstC and PstA) and a solute-binding protein (PstS).

It is found in the cell membrane. The enzyme catalyses phosphate(out) + ATP + H2O = ADP + 2 phosphate(in) + H(+). Part of the ABC transporter complex PstSACB involved in phosphate import. Responsible for energy coupling to the transport system. In Leifsonia xyli subsp. xyli (strain CTCB07), this protein is Phosphate import ATP-binding protein PstB.